We begin with the raw amino-acid sequence, 434 residues long: Serine/threonine transporter SstT (434 aa).

Transmembrane regions (helical) follow at residues 14-34 (IVIG…WSFI), 41-61 (FVGA…MSAI), 72-92 (FGTV…AAVA), 135-155 (ALVE…GSGL), 172-192 (TVSA…VGLL), 210-230 (LLML…PFMV), 282-302 (ISIP…VSIM), 316-336 (IFLA…VSGI), and 351-371 (FGIS…IGVV). Residues 414–434 (KGTAEVVTPEKANEAEESEQV) are disordered.

The protein belongs to the dicarboxylate/amino acid:cation symporter (DAACS) (TC 2.A.23) family.

It is found in the cell membrane. It carries out the reaction L-serine(in) + Na(+)(in) = L-serine(out) + Na(+)(out). The enzyme catalyses L-threonine(in) + Na(+)(in) = L-threonine(out) + Na(+)(out). In terms of biological role, involved in the import of serine and threonine into the cell, with the concomitant import of sodium (symport system). This Lacticaseibacillus paracasei (strain ATCC 334 / BCRC 17002 / CCUG 31169 / CIP 107868 / KCTC 3260 / NRRL B-441) (Lactobacillus paracasei) protein is Serine/threonine transporter SstT.